The chain runs to 361 residues: 3-dehydroquinate synthase (361 aa).

Residues 72–77, 130–131, Lys-142, and Lys-151 each bind NAD(+); these read SGEKEK and TT. Positions 184, 247, and 264 each coordinate Zn(2+).

Belongs to the sugar phosphate cyclases superfamily. Dehydroquinate synthase family. Co(2+) is required as a cofactor. Requires Zn(2+) as cofactor. The cofactor is NAD(+).

The protein resides in the cytoplasm. It carries out the reaction 7-phospho-2-dehydro-3-deoxy-D-arabino-heptonate = 3-dehydroquinate + phosphate. It functions in the pathway metabolic intermediate biosynthesis; chorismate biosynthesis; chorismate from D-erythrose 4-phosphate and phosphoenolpyruvate: step 2/7. Catalyzes the conversion of 3-deoxy-D-arabino-heptulosonate 7-phosphate (DAHP) to dehydroquinate (DHQ). This chain is 3-dehydroquinate synthase, found in Bacillus cereus (strain G9842).